The primary structure comprises 59 residues: Large ribosomal subunit protein uL30 (59 aa).

It belongs to the universal ribosomal protein uL30 family. Part of the 50S ribosomal subunit.

The protein is Large ribosomal subunit protein uL30 of Haemophilus influenzae (strain 86-028NP).